A 551-amino-acid polypeptide reads, in one-letter code: Glucans biosynthesis protein D (551 aa).

Positions 1–32 form a signal peptide, tat-type signal; it reads MDRRRFIKGSMAMAAVCGTSGIASLFSQAAFA.

This sequence belongs to the OpgD/OpgG family. Post-translationally, predicted to be exported by the Tat system. The position of the signal peptide cleavage has not been experimentally proven.

It is found in the periplasm. The protein operates within glycan metabolism; osmoregulated periplasmic glucan (OPG) biosynthesis. Probably involved in the control of the structural glucose backbone of osmoregulated periplasmic glucans (OPGs). This Escherichia coli (strain K12 / MC4100 / BW2952) protein is Glucans biosynthesis protein D.